The following is a 283-amino-acid chain: Pre-mRNA-splicing factor CWC23 (283 aa).

In terms of domain architecture, J spans 15-87 (NLYDVLELPT…DVRPHYDRWL (73 aa)).

Belongs to the DnaJ family. As to quaternary structure, belongs to the CWC complex (or CEF1-associated complex), a spliceosome sub-complex reminiscent of a late-stage spliceosome composed of the U2, U5 and U6 snRNAs and at least BUD13, BUD31, BRR2, CDC40, CEF1, CLF1, CUS1, CWC2, CWC15, CWC21, CWC22, CWC23, CWC24, CWC25, CWC27, ECM2, HSH155, IST3, ISY1, LEA1, MSL1, NTC20, PRP8, PRP9, PRP11, PRP19, PRP21, PRP22, PRP45, PRP46, SLU7, SMB1, SMD1, SMD2, SMD3, SMX2, SMX3, SNT309, SNU114, SPP2, SYF1, SYF2, RSE1 and YJU2.

Its subcellular location is the cytoplasm. It localises to the nucleus. Its function is as follows. Involved in pre-mRNA splicing. May be involved in endoplasmic reticulum-associated protein degradation (ERAD) and required for growth at low and high temperatures. The protein is Pre-mRNA-splicing factor CWC23 (CWC23) of Saccharomyces cerevisiae (strain ATCC 204508 / S288c) (Baker's yeast).